The primary structure comprises 94 residues: UPF0337 protein NE2439 (94 aa).

Residues 74 to 94 are disordered; that stretch reads KNVGEAVSSRQKSVKKRSLYT. The segment covering 85-94 has biased composition (basic residues); the sequence is KSVKKRSLYT.

The protein belongs to the UPF0337 (CsbD) family.

In Nitrosomonas europaea (strain ATCC 19718 / CIP 103999 / KCTC 2705 / NBRC 14298), this protein is UPF0337 protein NE2439.